A 398-amino-acid polypeptide reads, in one-letter code: Acetate kinase (398 aa).

Asn-9 is a Mg(2+) binding site. Lys-16 provides a ligand contact to ATP. Arg-89 is a substrate binding site. The active-site Proton donor/acceptor is the Asp-146. ATP is bound by residues 206-210, 281-283, and 329-333; these read HLGNG, DCR, and GIGEN. A Mg(2+)-binding site is contributed by Glu-384.

Belongs to the acetokinase family. As to quaternary structure, homodimer. Mg(2+) is required as a cofactor. It depends on Mn(2+) as a cofactor.

Its subcellular location is the cytoplasm. It catalyses the reaction acetate + ATP = acetyl phosphate + ADP. Its pathway is metabolic intermediate biosynthesis; acetyl-CoA biosynthesis; acetyl-CoA from acetate: step 1/2. Its function is as follows. Catalyzes the formation of acetyl phosphate from acetate and ATP. Can also catalyze the reverse reaction. In Vibrio campbellii (strain ATCC BAA-1116), this protein is Acetate kinase.